Here is a 228-residue protein sequence, read N- to C-terminus: Caspase recruitment domain-containing protein 19 (228 aa).

Residues Cys-7 and Cys-77 are joined by a disulfide bond. The CARD domain maps to 8 to 99 (DRLVQDTPFL…PLHSRLPSRH (92 aa)). The residue at position 113 (Val-113) is a Phosphoserine.

Associates with BCL10 by CARD-CARD interaction. As to expression, expressed in ovary, testis, placenta, skeletal muscle, kidney, lung, heart and liver (at protein level). Expressed in thymus and brain.

The protein localises to the nucleus. Its subcellular location is the endoplasmic reticulum membrane. The protein resides in the mitochondrion membrane. In terms of biological role, plays a role in inhibiting the effects of BCL10-induced activation of NF-kappa-B. May inhibit the phosphorylation of BCL10 in a CARD-dependent manner. The protein is Caspase recruitment domain-containing protein 19 (CARD19) of Homo sapiens (Human).